The primary structure comprises 169 residues: uncharacterized protein (169 aa).

The helical transmembrane segment at 55–77 (SLFIFKAVMILHTCLIVKSIRIF) threads the bilayer.

Its subcellular location is the membrane. This is an uncharacterized protein from Saccharomyces cerevisiae (strain ATCC 204508 / S288c) (Baker's yeast).